We begin with the raw amino-acid sequence, 253 residues long: Imidazole glycerol phosphate synthase subunit HisF (253 aa).

Catalysis depends on residues Asp11 and Asp130.

This sequence belongs to the HisA/HisF family. As to quaternary structure, heterodimer of HisH and HisF.

It localises to the cytoplasm. The enzyme catalyses 5-[(5-phospho-1-deoxy-D-ribulos-1-ylimino)methylamino]-1-(5-phospho-beta-D-ribosyl)imidazole-4-carboxamide + L-glutamine = D-erythro-1-(imidazol-4-yl)glycerol 3-phosphate + 5-amino-1-(5-phospho-beta-D-ribosyl)imidazole-4-carboxamide + L-glutamate + H(+). It functions in the pathway amino-acid biosynthesis; L-histidine biosynthesis; L-histidine from 5-phospho-alpha-D-ribose 1-diphosphate: step 5/9. IGPS catalyzes the conversion of PRFAR and glutamine to IGP, AICAR and glutamate. The HisF subunit catalyzes the cyclization activity that produces IGP and AICAR from PRFAR using the ammonia provided by the HisH subunit. In Paracoccus denitrificans (strain Pd 1222), this protein is Imidazole glycerol phosphate synthase subunit HisF.